The primary structure comprises 370 residues: 3-isopropylmalate dehydrogenase (370 aa).

77–90 contacts NAD(+); sequence GPKWDGVPYEHRPE. Substrate contacts are provided by arginine 97, arginine 107, arginine 135, and aspartate 226. The Mg(2+) site is built by aspartate 226, aspartate 250, and aspartate 254. 290–302 provides a ligand contact to NAD(+); that stretch reads GSAPDIAGKSIAN.

This sequence belongs to the isocitrate and isopropylmalate dehydrogenases family. LeuB type 1 subfamily. Homodimer. It depends on Mg(2+) as a cofactor. Requires Mn(2+) as cofactor.

Its subcellular location is the cytoplasm. It catalyses the reaction (2R,3S)-3-isopropylmalate + NAD(+) = 4-methyl-2-oxopentanoate + CO2 + NADH. It participates in amino-acid biosynthesis; L-leucine biosynthesis; L-leucine from 3-methyl-2-oxobutanoate: step 3/4. Functionally, catalyzes the oxidation of 3-carboxy-2-hydroxy-4-methylpentanoate (3-isopropylmalate) to 3-carboxy-4-methyl-2-oxopentanoate. The product decarboxylates to 4-methyl-2 oxopentanoate. This chain is 3-isopropylmalate dehydrogenase (leuB), found in Agrobacterium fabrum (strain C58 / ATCC 33970) (Agrobacterium tumefaciens (strain C58)).